The sequence spans 418 residues: Intracellular coagulation inhibitor 1 (418 aa).

A signal peptide spans Met1 to Ser24. Asn49 and Asn404 each carry an N-linked (GlcNAc...) asparagine glycan.

This sequence belongs to the serpin family. As to quaternary structure, monomer. Forms a covalent heterodimer with clotting factor C. Interacts with big defensin. In terms of processing, N-glycosylated. In terms of tissue distribution, expressed in hemocytes (at protein level).

It localises to the secreted. Functionally, serine protease inhibitor that specifically inhibits clotting factor C. Does not inhibit clotting factor B or proclotting enzyme. The chain is Intracellular coagulation inhibitor 1 from Tachypleus tridentatus (Japanese horseshoe crab).